We begin with the raw amino-acid sequence, 2376 residues long: MSGGGADQQSSPPGSLFLSPPAPAPKNGSSSDSSVGEKLGAAAADAGAGRTEEYRRRRHTMDKDSRGAAATTTTEHRFFRRSVICDSNATALELPGLPLPLPQPGAAAVAQQRSPPEPHREETLTPAVAHVAQQPPAAATPGEPAAAVPAAASAPGSASRDRQVAQPSQAGSKEEPPSARSGSGGGSAKEPQEERSQQQDDIEELETKAVGMSNDGRFLKFDIEIGRGSFKTVYKGLDTETTVEVAWCELQDRKLTKSERQRFKEEAEMLKGLQHPNIVRFYDSWESTVKGKKCIVLVTELMTSGTLKTYLKRFKVMKIKVLRSWCRQILKGLQFLHTRTPPIIHRDLKCDNIFITGPTGSVKIGDLGLATLKRASFAKSVIGTPEFMAPEMYEEKYDESVDVYAFGMCMLEMATSEYPYSECQNAAQIYRRVTSGVKPASFDKVAIPEVKEIIEGCIRQNKDERYSIKDLLNHAFFQEETGVRVELAEEDDGEKIAIKLWLRIEDIKKLKGKYKDNEAIEFSFDLERDVPEDVAQEMVESGYVCEGDHKTMAKAIKDRVSLIKRKREQRQLVREEQEKRKQEESSLKQQGEQQSSASQAGILQPSSASTGLPAAATTSASVSTQVEPEEPEADQHQQLQYQQPSISVLSDGTVDSGQGSSVFTESRVSSQQTVSYGSQHEQAHSTCTLPGHTASVVQAQAQPHGGYPPSSMAQGQSQGQPSSSSLTGIPSSQPVQHSQQQQGVQQTAPSQQTVQYSLPQTSAPSEPTTAQPASQPQPPQVLPPVSAGKQLPVSQPVPTIQGEPQISVATQPSVVPVHSGAHFLPVGQPLPPSLLPQYPVSQVPSAPHVSAAQPGFSPLPVTAAAGVNQPLLTLASSAAAAAVPGGSTVVPSQLPTLLQPVTQLPSQAHPQLLQTAVQSMGIPANLGQTAEAPLPSGDVLYQGFPPRLPPQYPGDSNIAPSSSVASVCIPSTVLSPPRPTEALAAPGYFPTVVQSYAESNLLVPVGSIGGQIQVSQPAVSLAQAPTTSSQQAALESTQGVSQVAPPEPVPAAPPQPTQPTTLVSSIDRSAHSDVASGMSDGNENVPSSSGRHEGRTIKRHYRKSVRSRSRHEKTSRPKLRILNVSNKGDRVVECQLETHNRKMVTFKFDLDGDNPEEIATIMVNNDFILAIEREAFVDQVREIIEKADEMLSEDVSVEPEGDQGLENLQGKDDYGFSGSQKLEGEFKQPIPASSMPQQIAGLPTSSLTQVVHSAGRRFIVSPVPESRLRESKVFTSEISDTVAASTSPGTGMNLSHSASSLSLQQAFSELRRAQMTEGPSTAPPHFSHTGPTFPVVPPSMSSIAGAAATPSVSVPATSCPFSDISTSVTPSEVTASTEKGIAGVATCTGVISSSGLTVPPASDSPILSSVVSSITVPVAVSVSTTSLSVQAPTPGSIVSNTGTFPSISVAMTSASAVSSTAAPGAKPPPVSSQQVSGSTAGITTLASVPTTAPAPSVASQPSLSLSSSTSAPTLAETIVVSAHSLDKASHSSTAGLALSLPASSSSASPAAGVSSSVSQPGVAHPLVIPSAVASIPVLSQAGPTCAPLLPQVPGIPPLVQPAASVPAVQQTLVHSQPQPALLPNQPHTHCPEMDADAQPRAPGIDDIKTLEEKLRSLFSEHSSSGTQHASVSLETSLVVETTVTPGIPTTAVAPGKLMTSTTSTCLPPTSLPLGTTGLSILPVVTPGQVSTPVSTIPAVKPGTAPSKPPSTKPPVLPLGTELPAGTPPSEQLPPFPGPSLMQAQQPLEDLDAQLRRTLSPETVVLTSTVGPVSVVAPTAAVEAGAQLQKDVSQVTEGPIPAPTSGTGVFQMGRFQVSVAMDDTQKEGKNKSEDVKSVHFESSTSESSVLSSSSPESTLVKPEPNGTAIRGISSDMPDSAHKTSASEAKSEAGQPTKVGRFQVTTTADKVGRFSVSRTEDAIAEAKKEGPVASPPFMDLEHSILPAVIPKKEKPELSEPSHLNGPSSDLEAAFLSRDGDDGSGSPHSPPQLCSKSLPIQSLSQSLSNSFNSSYMSSDNESDIEDEDLKLELRRLREKHLKEIQDLQSRQKHEIESLYTRLGKAPPAVIIPAAAPLAGRRRRPTKSKGSKSSRSSSLGNKSPGPAGNLSGQSTATVLHPQQTLPAPGNIPETGQNQLLQPLKPSPSSDNLYSAFTSDGAISVPSLSAPGQGTSSTNTVGGTVSSQAAQAQPPTMTSSRKGTFTDDLHKLVDNWARDAMNLSGRRGSKGHMSYEGPGMARKFSAPGQLCISMTSNLGGSAPISAASATSLGHFTKSMCPPQQYGFPAPPFGTQWSGTGGPAPQPLSQFQPVGTASLQNFNISNLQKSISNPPGSNLRTT.

Disordered stretches follow at residues 1 to 78 (MSGG…EHRF) and 93 to 201 (ELPG…QQDD). Composition is skewed to low complexity over residues 10-19 (SSPPGSLFLS) and 40-49 (GAAAADAGAG). 2 positions are modified to phosphoserine: S15 and S19. Positions 50 to 66 (RTEEYRRRRHTMDKDSR) are enriched in basic and acidic residues. The residue at position 60 (T60) is a Phosphothreonine. Positions 125 to 158 (TPAVAHVAQQPPAAATPGEPAAAVPAAASAPGSA) are enriched in low complexity. At S172 the chain carries Phosphoserine. In terms of domain architecture, Protein kinase spans 219 to 477 (LKFDIEIGRG…IKDLLNHAFF (259 aa)). S229 is a binding site for ATP. The chloride site is built by F281 and L297. Residues 299 to 302 (TELM) and K349 contribute to the ATP site. Catalysis depends on D366, which acts as the Proton acceptor. The chloride site is built by L367 and L369. Residues S376 and S380 each carry the phosphoserine; by autocatalysis modification. An autoinhibitory domain region spans residues 486–553 (ELAEEDDGEK…VCEGDHKTMA (68 aa)). Basic and acidic residues predominate over residues 571–586 (QLVREEQEKRKQEESS). 3 disordered regions span residues 571–641 (QLVR…QLQY), 701–799 (AQPH…PVPT), and 1026–1118 (TTSS…SRPK). 2 stretches are compositionally biased toward low complexity: residues 587–601 (LKQQGEQQSSASQAG) and 614–624 (AAATTSASVST). The interval 627–637 (EPEEPEADQHQ) is interaction with KLHL3. The segment covering 708–752 (PPSSMAQGQSQGQPSSSSLTGIPSSQPVQHSQQQQGVQQTAPSQQ) has biased composition (low complexity). Polar residues predominate over residues 753–766 (TVQYSLPQTSAPSE). The span at 1045–1057 (PPEPVPAAPPQPT) shows a compositional bias: pro residues. A compositionally biased stretch (polar residues) spans 1079 to 1089 (SDGNENVPSSS). Basic residues predominate over residues 1097–1118 (IKRHYRKSVRSRSRHEKTSRPK). The RFXV motif 1 motif lies at 1257–1260 (RFIV). A Phosphoserine modification is found at S1261. Disordered stretches follow at residues 1459–1478 (STAAPGAKPPPVSSQQVSGS) and 1734–1770 (STIPAVKPGTAPSKPPSTKPPVLPLGTELPAGTPPSE). Positions 1746-1756 (SKPPSTKPPVL) are enriched in pro residues. The RFXV motif 2 motif lies at 1853 to 1856 (RFQV). Residues 1862–1878 (DTQKEGKNKSEDVKSVH) show a composition bias toward basic and acidic residues. Residues 1862–1942 (DTQKEGKNKS…QPTKVGRFQV (81 aa)) form a disordered region. A compositionally biased stretch (low complexity) spans 1881–1899 (SSTSESSVLSSSSPESTLV). Short sequence motifs (RFXV motif) lie at residues 1939-1942 (RFQV) and 1951-1954 (RFSV). A phosphoserine mark is found at S1972, S1996, S2005, S2006, S2021, S2023, and S2026. Disordered regions lie at residues 1991–2033 (EKPE…LCSK) and 2110–2239 (AAAP…RKGT). Basic residues predominate over residues 2116–2128 (GRRRRPTKSKGSK). Residues 2129-2141 (SSRSSSLGNKSPG) show a composition bias toward low complexity. 2 stretches are compositionally biased toward polar residues: residues 2146 to 2161 (LSGQSTATVLHPQQTL) and 2169 to 2193 (ETGQNQLLQPLKPSPSSDNLYSAFT). The span at 2207–2223 (GQGTSSTNTVGGTVSSQ) shows a compositional bias: low complexity. Over residues 2224–2238 (AAQAQPPTMTSSRKG) the composition is skewed to polar residues. The amphipathic alpha-helix stretch occupies residues 2235–2255 (SRKGTFTDDLHKLVDNWARDA). A phosphoserine mark is found at S2264, S2280, S2364, and S2366.

This sequence belongs to the protein kinase superfamily. Ser/Thr protein kinase family. WNK subfamily. Interacts with WNK3. Interacts with WNK4; inhibiting the activity of WNK4. Interacts with SGK1; promoting its activation. Associates with the mTORC2 complex. Interacts with UVRAG. Interacts (via amphipathic alpha-helix region) with EMC2; promoting the ER membrane protein complex assembly. It depends on Mg(2+) as a cofactor. Post-translationally, autophosphorylated at Ser-376 and Ser-380, promoting its activity. Autophosphorylation at Ser-380 is inhibited by intracellular calcium. Phosphorylation at Thr-60 increases ability to activate SGK1. In terms of processing, ubiquitinated by the BCR(KLHL3) complex, leading to its degradation. Also ubiquitinated by the BCR(KLHL2) complex.

It localises to the cytoplasm. Its subcellular location is the nucleus. It is found in the cytoskeleton. The protein resides in the spindle. It catalyses the reaction L-seryl-[protein] + ATP = O-phospho-L-seryl-[protein] + ADP + H(+). The enzyme catalyses L-threonyl-[protein] + ATP = O-phospho-L-threonyl-[protein] + ADP + H(+). With respect to regulation, activated in response to hyperosmotic stress: cell shrinkage promotes formation of a membraneless compartment that concentrates WNK1 with its substrates, OXSR1/OSR1 and STK39/SPAK. Activation requires autophosphorylation of Ser-380 and, to a lower extent, Ser-376. Autophosphorylation and subsequent activation is inhibited by increases in intracellular ionic strength: Cl(-) potently inhibits WNK1 kinase activity via direct binding. Also inhibited by K(+) ions. Its function is as follows. Serine/threonine-protein kinase component of the WNK1-SPAK/OSR1 kinase cascade, which acts as a key regulator of blood pressure and regulatory volume increase by promoting ion influx. WNK1 mediates regulatory volume increase in response to hyperosmotic stress by acting as a molecular crowding sensor, which senses cell shrinkage and mediates formation of a membraneless compartment by undergoing liquid-liquid phase separation. The membraneless compartment concentrates WNK1 with its substrates, OXSR1/OSR1 and STK39/SPAK, promoting WNK1-dependent phosphorylation and activation of downstream kinases OXSR1/OSR1 and STK39/SPAK. Following activation, OXSR1/OSR1 and STK39/SPAK catalyze phosphorylation of ion cotransporters SLC12A1/NKCC2, SLC12A2/NKCC1, SLC12A5/KCC2 and SLC12A6/KCC3, regulating their activity. Phosphorylation of Na-K-Cl cotransporters SLC12A2/NKCC1 and SLC12A2/NKCC1 promote their activation and ion influx; simultaneously, phosphorylation of K-Cl cotransporters SLC12A5/KCC2 and SLC12A6/KCC3 inhibit their activity, blocking ion efflux. Also acts as a regulator of angiogenesis in endothelial cells via activation of OXSR1/OSR1 and STK39/SPAK: activation of OXSR1/OSR1 regulates chemotaxis and invasion, while STK39/SPAK regulates endothelial cell proliferation. Also acts independently of the WNK1-SPAK/OSR1 kinase cascade by catalyzing phosphorylation of other substrates, such as SYT2, PCF11 and NEDD4L. Mediates phosphorylation of SYT2, regulating SYT2 association with phospholipids and membrane-binding. Regulates mRNA export in the nucleus by mediating phosphorylation of PCF11, thereby decreasing the association between PCF11 and POLR2A/RNA polymerase II and promoting mRNA export to the cytoplasm. Acts as a negative regulator of autophagy. Required for the abscission step during mitosis, independently of the WNK1-SPAK/OSR1 kinase cascade. May also play a role in actin cytoskeletal reorganization. Also acts as a scaffold protein independently of its protein kinase activity: negatively regulates cell membrane localization of various transporters and channels, such as SLC4A4, SLC26A6, SLC26A9, TRPV4 and CFTR. Involved in the regulation of epithelial Na(+) channel (ENaC) by promoting activation of SGK1 in a kinase-independent manner: probably acts as a scaffold protein that promotes the recruitment of SGK1 to the mTORC2 complex in response to chloride, leading to mTORC2-dependent phosphorylation and activation of SGK1. Acts as an assembly factor for the ER membrane protein complex independently of its protein kinase activity: associates with EMC2 in the cytoplasm via its amphipathic alpha-helix, and prevents EMC2 ubiquitination and subsequent degradation, thereby promoting EMC2 stabilization. The protein is Serine/threonine-protein kinase WNK1 of Sus scrofa (Pig).